Consider the following 323-residue polypeptide: tRNA U34 carboxymethyltransferase (323 aa).

Residues K91, W105, K110, G130, 152 to 154, 181 to 182, M196, Y200, and R315 contribute to the carboxy-S-adenosyl-L-methionine site; these read DPT and IE.

It belongs to the class I-like SAM-binding methyltransferase superfamily. CmoB family. As to quaternary structure, homotetramer.

The enzyme catalyses carboxy-S-adenosyl-L-methionine + 5-hydroxyuridine(34) in tRNA = 5-carboxymethoxyuridine(34) in tRNA + S-adenosyl-L-homocysteine + H(+). In terms of biological role, catalyzes carboxymethyl transfer from carboxy-S-adenosyl-L-methionine (Cx-SAM) to 5-hydroxyuridine (ho5U) to form 5-carboxymethoxyuridine (cmo5U) at position 34 in tRNAs. The polypeptide is tRNA U34 carboxymethyltransferase (Salmonella agona (strain SL483)).